Here is a 358-residue protein sequence, read N- to C-terminus: Protein phosphatase 1 regulatory subunit 3G (358 aa).

Positions 1–71 (MEPIGARLSL…KEEAAPQEQE (71 aa)) are disordered. Over residues 11 to 29 (EAPGPAPFREAPPAEELPA) the composition is skewed to low complexity. A Phosphoserine modification is found at Ser-86. A CBM21 domain is found at 210–350 (AERLQRQRVC…NNAGANYTLR (141 aa)). Positions 270–280 (EPLEPQQPEAP) are enriched in low complexity. The tract at residues 270-295 (EPLEPQQPEAPSGASEPGSGDAKKEP) is disordered.

Glycogen-targeting subunit for protein phosphatase 1 (PP1). Involved in the regulation of hepatic glycogenesis in a manner coupled to the fasting-feeding cycle and distinct from other glycogen-targeting subunits. This chain is Protein phosphatase 1 regulatory subunit 3G (PPP1R3G), found in Homo sapiens (Human).